The sequence spans 139 residues: Oocyte zinc finger protein XlCOF14 (139 aa).

5 consecutive C2H2-type zinc fingers follow at residues 6 to 28 (FICS…SNVH), 33 to 55 (FPCT…QKIH), 61 to 83 (HKCT…HLSH), 89 to 111 (FSCF…QLSH), and 117 to 139 (FVCS…CHIH).

The protein belongs to the krueppel C2H2-type zinc-finger protein family.

The protein resides in the nucleus. In terms of biological role, may be involved in transcriptional regulation. This is Oocyte zinc finger protein XlCOF14 from Xenopus laevis (African clawed frog).